The chain runs to 327 residues: MRVVFFGTPQFAVPTLQQLLDAPDVEVMAVVSQPDRRRGRGNQVSASPVKALAIAYDLPVWQPERLRRDPEVLSQLQQTQADAFVVVAYGQLLPAEVLAMPRLGCINVHGSLLPAYRGAAPIQWSLINGDRETGIVTMQMDVGMDTGPMLLRWTTPIALDDNSQTLGDRLATAGAELLLQTLRQLDQGHLTAISQNEAEATYARLLQKEDFQLSWDQSALELHNRIRGLYPGASLPVQGDRLKVLASLPLGLGLLLSAAYADWQDWQPDPAAQPGTVLAIAKSLGPIVATREGALLLLQVQPAGRKPLSGWDWANGLRLQEGLSLLE.

111-114 serves as a coordination point for (6S)-5,6,7,8-tetrahydrofolate; the sequence is SLLP.

The protein belongs to the Fmt family.

It carries out the reaction L-methionyl-tRNA(fMet) + (6R)-10-formyltetrahydrofolate = N-formyl-L-methionyl-tRNA(fMet) + (6S)-5,6,7,8-tetrahydrofolate + H(+). In terms of biological role, attaches a formyl group to the free amino group of methionyl-tRNA(fMet). The formyl group appears to play a dual role in the initiator identity of N-formylmethionyl-tRNA by promoting its recognition by IF2 and preventing the misappropriation of this tRNA by the elongation apparatus. The chain is Methionyl-tRNA formyltransferase from Synechococcus elongatus (strain ATCC 33912 / PCC 7942 / FACHB-805) (Anacystis nidulans R2).